The sequence spans 360 residues: Coiled-coil domain-containing protein 86 (360 aa).

Over residues 1 to 12 the composition is skewed to basic residues; sequence MDTPLRRSRRLG. Disordered stretches follow at residues 1–314 and 328–360; these read MDTP…ENER and LKRA…AAKI. 5 positions are modified to phosphoserine: S21, S24, S47, S50, and S58. T65 carries the post-translational modification Phosphothreonine. Phosphoserine occurs at positions 66, 69, 80, 91, 102, 110, 113, and 128. The segment covering 66–83 has biased composition (polar residues); it reads SPGSPRLQQGSGLESPQG. Over residues 153–164 the composition is skewed to pro residues; that stretch reads QLPPVPGSPEPY. A phosphoserine mark is found at S188, S217, and S218. A compositionally biased stretch (basic residues) spans 238–254; that stretch reads GKPKSGRVWKDRSKKRF. The stretch at 272-323 forms a coiled coil; it reads KERQERKLAKDFARHLEEEKERRRQEKKQRRAENLKRRLENERKAEVVQVIR. Basic and acidic residues-rich tracts occupy residues 273-295 and 302-314; these read ERQE…ERRR and RAEN…ENER. Citrulline is present on R342.

In terms of processing, citrullinated by PADI4.

The protein resides in the nucleus. It is found in the chromosome. Its subcellular location is the nucleolus. Its function is as follows. Required for proper chromosome segregation during mitosis and error-free mitotic progression. This Pongo abelii (Sumatran orangutan) protein is Coiled-coil domain-containing protein 86.